Here is a 561-residue protein sequence, read N- to C-terminus: Arginine--tRNA ligase (561 aa).

A 'HIGH' region motif is present at residues 136–146 (ANPTGLLHMGN).

The protein belongs to the class-I aminoacyl-tRNA synthetase family. In terms of assembly, monomer.

The protein localises to the cytoplasm. It carries out the reaction tRNA(Arg) + L-arginine + ATP = L-arginyl-tRNA(Arg) + AMP + diphosphate. The protein is Arginine--tRNA ligase of Desulforamulus reducens (strain ATCC BAA-1160 / DSM 100696 / MI-1) (Desulfotomaculum reducens).